A 184-amino-acid chain; its full sequence is Probable RNA 2'-phosphotransferase (184 aa).

This sequence belongs to the KptA/TPT1 family.

Removes the 2'-phosphate from RNA via an intermediate in which the phosphate is ADP-ribosylated by NAD followed by a presumed transesterification to release the RNA and generate ADP-ribose 1''-2''-cyclic phosphate (APPR&gt;P). May function as an ADP-ribosylase. This Rhodopirellula baltica (strain DSM 10527 / NCIMB 13988 / SH1) protein is Probable RNA 2'-phosphotransferase.